A 259-amino-acid polypeptide reads, in one-letter code: Thiazole synthase (259 aa).

Lysine 98 acts as the Schiff-base intermediate with DXP in catalysis. Residues glycine 159, alanine 185–glycine 186, and asparagine 207–serine 208 each bind 1-deoxy-D-xylulose 5-phosphate.

Belongs to the ThiG family. As to quaternary structure, homotetramer. Forms heterodimers with either ThiH or ThiS.

The protein localises to the cytoplasm. It catalyses the reaction [ThiS sulfur-carrier protein]-C-terminal-Gly-aminoethanethioate + 2-iminoacetate + 1-deoxy-D-xylulose 5-phosphate = [ThiS sulfur-carrier protein]-C-terminal Gly-Gly + 2-[(2R,5Z)-2-carboxy-4-methylthiazol-5(2H)-ylidene]ethyl phosphate + 2 H2O + H(+). It functions in the pathway cofactor biosynthesis; thiamine diphosphate biosynthesis. Catalyzes the rearrangement of 1-deoxy-D-xylulose 5-phosphate (DXP) to produce the thiazole phosphate moiety of thiamine. Sulfur is provided by the thiocarboxylate moiety of the carrier protein ThiS. In vitro, sulfur can be provided by H(2)S. In Chlorobaculum tepidum (strain ATCC 49652 / DSM 12025 / NBRC 103806 / TLS) (Chlorobium tepidum), this protein is Thiazole synthase.